A 500-amino-acid polypeptide reads, in one-letter code: Glycerol kinase (500 aa).

Residue threonine 13 coordinates ADP. Positions 13, 14, and 15 each coordinate ATP. Sn-glycerol 3-phosphate is bound at residue threonine 13. ADP is bound at residue arginine 17. Sn-glycerol 3-phosphate contacts are provided by arginine 83, glutamate 84, tyrosine 135, and aspartate 244. Glycerol contacts are provided by arginine 83, glutamate 84, tyrosine 135, aspartate 244, and glutamine 245. 2 residues coordinate ADP: threonine 266 and glycine 309. Residues threonine 266, glycine 309, glutamine 313, and glycine 410 each coordinate ATP. Positions 410 and 414 each coordinate ADP.

The protein belongs to the FGGY kinase family.

The catalysed reaction is glycerol + ATP = sn-glycerol 3-phosphate + ADP + H(+). The protein operates within polyol metabolism; glycerol degradation via glycerol kinase pathway; sn-glycerol 3-phosphate from glycerol: step 1/1. Its activity is regulated as follows. Inhibited by fructose 1,6-bisphosphate (FBP). Its function is as follows. Key enzyme in the regulation of glycerol uptake and metabolism. Catalyzes the phosphorylation of glycerol to yield sn-glycerol 3-phosphate. The sequence is that of Glycerol kinase from Burkholderia pseudomallei (strain K96243).